Consider the following 391-residue polypeptide: NAD(P)H-quinone oxidoreductase subunit H, chloroplastic (391 aa).

Belongs to the complex I 49 kDa subunit family. In terms of assembly, NDH is composed of at least 16 different subunits, 5 of which are encoded in the nucleus.

Its subcellular location is the plastid. It localises to the chloroplast thylakoid membrane. The catalysed reaction is a plastoquinone + NADH + (n+1) H(+)(in) = a plastoquinol + NAD(+) + n H(+)(out). It catalyses the reaction a plastoquinone + NADPH + (n+1) H(+)(in) = a plastoquinol + NADP(+) + n H(+)(out). Functionally, NDH shuttles electrons from NAD(P)H:plastoquinone, via FMN and iron-sulfur (Fe-S) centers, to quinones in the photosynthetic chain and possibly in a chloroplast respiratory chain. The immediate electron acceptor for the enzyme in this species is believed to be plastoquinone. Couples the redox reaction to proton translocation, and thus conserves the redox energy in a proton gradient. This Physcomitrium patens (Spreading-leaved earth moss) protein is NAD(P)H-quinone oxidoreductase subunit H, chloroplastic.